The chain runs to 185 residues: Elongation factor P (185 aa).

This sequence belongs to the elongation factor P family.

It is found in the cytoplasm. It functions in the pathway protein biosynthesis; polypeptide chain elongation. Involved in peptide bond synthesis. Stimulates efficient translation and peptide-bond synthesis on native or reconstituted 70S ribosomes in vitro. Probably functions indirectly by altering the affinity of the ribosome for aminoacyl-tRNA, thus increasing their reactivity as acceptors for peptidyl transferase. The protein is Elongation factor P of Dictyoglomus turgidum (strain DSM 6724 / Z-1310).